The chain runs to 420 residues: Transcription activator GLK1 (420 aa).

A disordered region spans residues 74-152; sequence GDFSNHMNAS…NRISNNEGKR (79 aa). Basic and acidic residues predominate over residues 106–117; it reads KGEEVVSKRDDV. The segment covering 135-147 has biased composition (low complexity); the sequence is SSSASSKNNRISN. A DNA-binding region (myb-like GARP) is located at residues 150–209; that stretch reads GKRKVKVDWTPELHRRFVEAVEQLGVDKAVPSRILELMGVHCLTRHNVASHLQKYRSHRK.

In terms of assembly, interacts with NAC92. In terms of tissue distribution, expressed in rosette and cauline leaves. Expressed at low levels in cotyledons and shoots.

It is found in the nucleus. Its function is as follows. Transcriptional activator that functions with GLK2 to promote chloroplast development. Acts as an activator of nuclear photosynthetic genes involved in chlorophyll biosynthesis, light harvesting, and electron transport. Acts in a cell-autonomous manner to coordinate and maintain the photosynthetic apparatus within individual cells. May function in photosynthetic capacity optimization by integrating responses to variable environmental and endogenous cues. Prevents premature senescence. This Arabidopsis thaliana (Mouse-ear cress) protein is Transcription activator GLK1 (GLK1).